The chain runs to 438 residues: 3-phosphoshikimate 1-carboxyvinyltransferase (438 aa).

3-phosphoshikimate is bound by residues Lys-21, Ser-22, and Arg-26. Residue Lys-21 participates in phosphoenolpyruvate binding. Phosphoenolpyruvate-binding residues include Gly-95 and Arg-123. The 3-phosphoshikimate site is built by Ser-167, Gln-169, Asp-315, and Lys-342. Gln-169 contacts phosphoenolpyruvate. The active-site Proton acceptor is the Asp-315. Phosphoenolpyruvate is bound by residues Arg-346 and Arg-387.

The protein belongs to the EPSP synthase family. Monomer.

It localises to the cytoplasm. It carries out the reaction 3-phosphoshikimate + phosphoenolpyruvate = 5-O-(1-carboxyvinyl)-3-phosphoshikimate + phosphate. The protein operates within metabolic intermediate biosynthesis; chorismate biosynthesis; chorismate from D-erythrose 4-phosphate and phosphoenolpyruvate: step 6/7. Its function is as follows. Catalyzes the transfer of the enolpyruvyl moiety of phosphoenolpyruvate (PEP) to the 5-hydroxyl of shikimate-3-phosphate (S3P) to produce enolpyruvyl shikimate-3-phosphate and inorganic phosphate. The chain is 3-phosphoshikimate 1-carboxyvinyltransferase from Coxiella burnetii (strain CbuK_Q154) (Coxiella burnetii (strain Q154)).